A 319-amino-acid polypeptide reads, in one-letter code: Zinc finger protein C19B12.07c (319 aa).

The C2H2-type zinc-finger motif lies at Phe-146–His-170.

It belongs to the ZNF277 family.

The protein localises to the nucleus. In Schizosaccharomyces pombe (strain 972 / ATCC 24843) (Fission yeast), this protein is Zinc finger protein C19B12.07c.